A 519-amino-acid polypeptide reads, in one-letter code: Molybdate transporter 1 (519 aa).

Transmembrane regions (helical) follow at residues 98 to 118, 164 to 184, 370 to 390, 412 to 432, 436 to 456, 464 to 484, and 485 to 505; these read LLHAGLFVAGCVGLLGASQAI, LGTEGLVVGAVALAAMIATTL, AVALSVALLNGAGVWLGAMPC, ILLGCIKAALGLLFGGSLVVL, FPQPLLGALLTVSGIELASVV, GYTFALLTAVAILALDNTGTG, and FLVGLVGVAAVAAYEGAVAAA.

The protein belongs to the SLC26A/SulP transporter (TC 2.A.53) family.

It localises to the membrane. With respect to regulation, 60% inhibition by 20 uM tungstate or by lack of glucose in the medium, but no inhibition by sulfate. High affinity molybdate transporter. Acts through an energy-dependent process. The chain is Molybdate transporter 1 (MOT1) from Chlamydomonas reinhardtii (Chlamydomonas smithii).